The following is a 347-amino-acid chain: Autoinducer 2 import system permease protein LsrC (347 aa).

The next 9 membrane-spanning stretches (helical) occupy residues 14-34 (LLAI…YLSV), 39-59 (MVFS…MVML), 72-92 (GMCA…PVAC), 93-113 (LATL…VAWL), 115-135 (IPAI…MLLW), 155-175 (VFLG…LMAW), 213-233 (LNGG…GFIP), 249-269 (VLGG…ILGA), and 284-304 (IPAW…LVFD).

It belongs to the binding-protein-dependent transport system permease family. AraH/RbsC subfamily. As to quaternary structure, the complex is composed of two ATP-binding proteins (LsrA), two transmembrane proteins (LsrC and LsrD) and a solute-binding protein (LsrB).

It is found in the cell inner membrane. Part of the ABC transporter complex LsrABCD involved in autoinducer 2 (AI-2) import. Probably responsible for the translocation of the substrate across the membrane. This chain is Autoinducer 2 import system permease protein LsrC (lsrC), found in Salmonella paratyphi A (strain ATCC 9150 / SARB42).